A 714-amino-acid polypeptide reads, in one-letter code: NCK-interacting protein with SH3 domain (714 aa).

In terms of domain architecture, SH3 spans 1–58 (MYRALYAFRSAEPNAMAFAAGETFLVLERSSTHWWLAARARSGETGYVPPAYLHRLQG). Disordered regions lie at residues 103–126 (TLSRRGTSASSATVMTPSTSDHHL) and 139–298 (RTGF…AAET). Residues 106 to 121 (RRGTSASSATVMTPST) show a composition bias toward polar residues. S120 is subject to Phosphoserine. The short motif at 168–185 (RRAAPTTPPPPVKRRDRE) is the Nuclear localization signal element. Phosphothreonine is present on T174. Over residues 200-215 (SGGSSVSSGSSASSTS) the composition is skewed to low complexity. Over residues 216–226 (MDTLYTGSSPS) the composition is skewed to polar residues. The segment covering 252–263 (QPSPSKAPSPEP) has biased composition (pro residues). A phosphoserine mark is found at S260, S286, and S673.

In terms of assembly, associates with the intermediate filaments, vimentin and desmin. Binds the first and third SH3 domains of NCK. Binds the proline-rich domains of N-WASP through its SH3 domain. Similarly, binds diaphanous protein homolog 1 (DRF1). Binds the SH3 domains of GRB2 through its proline-rich domains. Interacts with FASLG.

The protein localises to the nucleus. Has an important role in stress fiber formation induced by active diaphanous protein homolog 1 (DRF1). Induces microspike formation, in vivo. In vitro, stimulates N-WASP-induced ARP2/3 complex activation in the absence of CDC42. May play an important role in the maintenance of sarcomere and/or in the assembly of myofibrils into sarcomeres. Implicated in regulation of actin polymerization and cell adhesion. In Mus musculus (Mouse), this protein is NCK-interacting protein with SH3 domain (Nckipsd).